A 178-amino-acid polypeptide reads, in one-letter code: Ribosome maturation factor RimM (178 aa).

The PRC barrel domain maps to 103-177 (SKDEYYFFEI…KIVVKVPEWL (75 aa)).

Belongs to the RimM family. As to quaternary structure, binds ribosomal protein uS19.

The protein localises to the cytoplasm. An accessory protein needed during the final step in the assembly of 30S ribosomal subunit, possibly for assembly of the head region. Essential for efficient processing of 16S rRNA. May be needed both before and after RbfA during the maturation of 16S rRNA. It has affinity for free ribosomal 30S subunits but not for 70S ribosomes. In Thermosipho africanus (strain TCF52B), this protein is Ribosome maturation factor RimM.